Reading from the N-terminus, the 270-residue chain is MELGIVAKRETPRAVELADRIRRHVDVPVTLDNLTADELDANGTDVTSLSACDLVVSIGGDGTFLFAAREVSPTPVLGVNLGEVGFLNAVSPEECVETVAGVVERMQAGDAELQELPQLQATGPGLSLPAAVNEVAVLGPQRGRDNGLDIDVRVNGEGYSSGRADGVLVSTPTGSTAYNLSEGGPIVHPDVSAFVVTEMCAESSMPSLAVPTDRTITVHVDGADHAVVAADGRTRSQVAPPAEITLAVAADPVRIAGPKLEFFTALDKLD.

Asp61 (proton acceptor) is an active-site residue. NAD(+)-binding positions include 61–62 (DG), 133–134 (NE), Arg144, Arg163, Asp165, and 176–181 (TAYNLS).

The protein belongs to the NAD kinase family. Requires a divalent metal cation as cofactor.

It is found in the cytoplasm. It carries out the reaction NAD(+) + ATP = ADP + NADP(+) + H(+). Functionally, involved in the regulation of the intracellular balance of NAD and NADP, and is a key enzyme in the biosynthesis of NADP. Catalyzes specifically the phosphorylation on 2'-hydroxyl of the adenosine moiety of NAD to yield NADP. This Natronomonas pharaonis (strain ATCC 35678 / DSM 2160 / CIP 103997 / JCM 8858 / NBRC 14720 / NCIMB 2260 / Gabara) (Halobacterium pharaonis) protein is NAD kinase.